Here is a 175-residue protein sequence, read N- to C-terminus: MPSSALLYCLIFLAGVAASIKSENSCIHFPTSLPHMLRELRAAFGPVKSFFQTKDQMGDLLLTGSLLEDFKGYLGCQALSEMIQFYLEDVMPKAESDGEDIKEHVNSLGEKLKTLRLRLRRCHQFLPCENKSKAVEEVKSAFSKLQERGVYKAMGEFDIFINYIEAYMTMKMRKN.

An N-terminal signal peptide occupies residues Met1 to Ala18. 2 disulfides stabilise this stretch: Cys26-Cys122 and Cys76-Cys128. The N-linked (GlcNAc...) asparagine glycan is linked to Asn130.

This sequence belongs to the IL-10 family. As to quaternary structure, homodimer. Interacts with IL10RA and IL10RB.

The protein localises to the secreted. Major immune regulatory cytokine that acts on many cells of the immune system where it has profound anti-inflammatory functions, limiting excessive tissue disruption caused by inflammation. Mechanistically, IL10 binds to its heterotetrameric receptor comprising IL10RA and IL10RB leading to JAK1 and STAT2-mediated phosphorylation of STAT3. In turn, STAT3 translocates to the nucleus where it drives expression of anti-inflammatory mediators. Targets antigen-presenting cells (APCs) such as macrophages and monocytes and inhibits their release of pro-inflammatory cytokines including granulocyte-macrophage colony-stimulating factor /GM-CSF, granulocyte colony-stimulating factor/G-CSF, IL-1 alpha, IL-1 beta, IL-6, IL-8 and TNF-alpha. Also interferes with antigen presentation by reducing the expression of MHC-class II and co-stimulatory molecules, thereby inhibiting their ability to induce T cell activation. In addition, controls the inflammatory response of macrophages by reprogramming essential metabolic pathways including mTOR signaling. The sequence is that of Interleukin-10 (IL10) from Sus scrofa (Pig).